Reading from the N-terminus, the 228-residue chain is Large ribosomal subunit protein uL16 (228 aa).

It belongs to the universal ribosomal protein uL16 family. In terms of assembly, component of the small ribosomal subunit. Mature ribosomes consist of a small (40S) and a large (60S) subunit. The 40S subunit contains about 33 different proteins and 1 molecule of RNA (18S). The 60S subunit contains about 49 different proteins and 3 molecules of RNA (25S, 5.8S and 5S).

The polypeptide is Large ribosomal subunit protein uL16 (RPL10) (Pinus taeda (Loblolly pine)).